Consider the following 73-residue polypeptide: Large ribosomal subunit protein bL28 (73 aa).

The protein belongs to the bacterial ribosomal protein bL28 family.

The polypeptide is Large ribosomal subunit protein bL28 (Anaeromyxobacter sp. (strain Fw109-5)).